Here is a 399-residue protein sequence, read N- to C-terminus: Homocysteine-responsive endoplasmic reticulum-resident ubiquitin-like domain member 2 protein (399 aa).

The 80-residue stretch at 10-89 (VTLVIKAPNQ…HMVHLVCASR (80 aa)) folds into the Ubiquitin-like domain. 2 disordered regions span residues 88–144 (SRTP…SIRH) and 211–250 (ASNQ…APEM). Residues 95-106 (PKASTSNKSMGT) show a composition bias toward polar residues. The segment covering 107-124 (ASISRSSSEHSGSASPAS) has biased composition (low complexity). Residues 211 to 221 (ASNQSPSNGEN) show a composition bias toward polar residues. Over residues 234-246 (SPPPNPPRAPPNV) the composition is skewed to pro residues. The helical transmembrane segment at 299 to 319 (FVMVMGAMILVYMHQAGWFPL) threads the bilayer.

It localises to the membrane. Could be involved in the unfolded protein response (UPR) pathway. The sequence is that of Homocysteine-responsive endoplasmic reticulum-resident ubiquitin-like domain member 2 protein (herpud2) from Xenopus tropicalis (Western clawed frog).